Reading from the N-terminus, the 752-residue chain is DNA topoisomerase 4 subunit A (752 aa).

One can recognise a Topo IIA-type catalytic domain in the interval 31–494 (LPFIGDGLKP…EAKAMSEHDM (464 aa)). Residue Y120 is the O-(5'-phospho-DNA)-tyrosine intermediate of the active site. 2 disordered regions span residues 472–492 (YGDDRRSPLQEREEAKAMSEH) and 718–752 (TGERGRRGTLMRGLQRIDRVEIDSPRRASSGDSEE). Composition is skewed to basic and acidic residues over residues 473 to 492 (GDDRRSPLQEREEAKAMSEH) and 732 to 743 (QRIDRVEIDSPR).

This sequence belongs to the type II topoisomerase GyrA/ParC subunit family. ParC type 1 subfamily. Heterotetramer composed of ParC and ParE.

The protein resides in the cell membrane. The catalysed reaction is ATP-dependent breakage, passage and rejoining of double-stranded DNA.. Topoisomerase IV is essential for chromosome segregation. It relaxes supercoiled DNA. Performs the decatenation events required during the replication of a circular DNA molecule. The sequence is that of DNA topoisomerase 4 subunit A from Escherichia coli O157:H7.